Here is a 423-residue protein sequence, read N- to C-terminus: uncharacterized protein (423 aa).

3 residues coordinate substrate: Ser51, Asp138, and Asn150. ATP is bound by residues 170 to 171 (TD) and 214 to 220 (TGGMRTK). The region spanning 315–406 (KGAIIIDENS…EKIHDVLGYS (92 aa)) is the PUA domain.

This sequence belongs to the glutamate 5-kinase family.

The protein localises to the cytoplasm. This is an uncharacterized protein from Saccharomyces cerevisiae (strain ATCC 204508 / S288c) (Baker's yeast).